The chain runs to 300 residues: Elongator complex protein 5 (300 aa).

S252 carries the phosphoserine modification. The interval 264–300 is disordered; that stretch reads QQALLRPRPGQATSHIFYEPDAYDDLDQEDPDDDLDI. Over residues 284–300 the composition is skewed to acidic residues; the sequence is DAYDDLDQEDPDDDLDI.

Belongs to the ELP5 family. Component of the elongator complex which consists of ELP1, ELP2, ELP3, ELP4, ELP5 and ELP6; in the complex, is required for optimal binding of ELP3 to ELP4. In terms of processing, tyrosine-phosphorylated. Ubiquitously expressed with high levels in heart, brain, liver, skeletal muscle and testis.

It is found in the nucleus. The protein resides in the cytoplasm. The protein operates within tRNA modification; 5-methoxycarbonylmethyl-2-thiouridine-tRNA biosynthesis. In terms of biological role, component of the elongator complex which is required for multiple tRNA modifications, including mcm5U (5-methoxycarbonylmethyl uridine), mcm5s2U (5-methoxycarbonylmethyl-2-thiouridine), and ncm5U (5-carbamoylmethyl uridine). The elongator complex catalyzes formation of carboxymethyluridine in the wobble base at position 34 in tRNAs. Involved in cell migration. The protein is Elongator complex protein 5 of Homo sapiens (Human).